The chain runs to 239 residues: Proteasome subunit beta type-6 (239 aa).

Residue A2 is modified to N-acetylalanine. The propeptide at 2–34 (AATLVAARGTRPAPAWGPEAIAPDWENREVSTG) is removed in mature form. The Nucleophile role is filled by T35. Position 69 is a phosphothreonine (T69).

It belongs to the peptidase T1B family. The 26S proteasome consists of a 20S proteasome core and two 19S regulatory subunits. The 20S proteasome core is a barrel-shaped complex made of 28 subunits that are arranged in four stacked rings. The two outer rings are each formed by seven alpha subunits, and the two inner rings are formed by seven beta subunits. The proteolytic activity is exerted by three beta-subunits PSMB5, PSMB6 and PSMB7.

It localises to the cytoplasm. It is found in the nucleus. The catalysed reaction is Cleavage of peptide bonds with very broad specificity.. Component of the 20S core proteasome complex involved in the proteolytic degradation of most intracellular proteins. This complex plays numerous essential roles within the cell by associating with different regulatory particles. Associated with two 19S regulatory particles, forms the 26S proteasome and thus participates in the ATP-dependent degradation of ubiquitinated proteins. The 26S proteasome plays a key role in the maintenance of protein homeostasis by removing misfolded or damaged proteins that could impair cellular functions, and by removing proteins whose functions are no longer required. Associated with the PA200 or PA28, the 20S proteasome mediates ubiquitin-independent protein degradation. This type of proteolysis is required in several pathways including spermatogenesis (20S-PA200 complex) or generation of a subset of MHC class I-presented antigenic peptides (20S-PA28 complex). Within the 20S core complex, PSMB6 displays a peptidylglutamyl-hydrolyzing activity also termed postacidic or caspase-like activity, meaning that the peptides bond hydrolysis occurs directly after acidic residues. This Bos taurus (Bovine) protein is Proteasome subunit beta type-6 (PSMB6).